The primary structure comprises 363 residues: Spermatogenesis-associated protein 22 (363 aa).

Polar residues-rich tracts occupy residues 1–12 (MKRSLNENSARS) and 145–157 (SCPM…QQKQ). Disordered regions lie at residues 1-51 (MKRS…DNYD) and 145-169 (SCPM…LPRN).

Component of a multiprotein complex with MEIOB and RPA2. Interacts with MEIOB. Interacts with the complex BRME1:HSF2BP:BRCA2. Expressed in testis.

It localises to the chromosome. Functionally, meiosis-specific protein required for homologous recombination in meiosis I. The chain is Spermatogenesis-associated protein 22 (SPATA22) from Macaca fascicularis (Crab-eating macaque).